Here is a 281-residue protein sequence, read N- to C-terminus: Pantothenate synthetase (281 aa).

30–37 is an ATP binding site; the sequence is MGNLHLGH. The active-site Proton donor is the His37. A (R)-pantoate-binding site is contributed by Gln61. Gln61 is a beta-alanine binding site. ATP is bound at residue 149–152; it reads GRKD. (R)-pantoate is bound at residue Gln155. Residues Ile178 and 186–189 contribute to the ATP site; that span reads MSSR.

Belongs to the pantothenate synthetase family. As to quaternary structure, homodimer.

It localises to the cytoplasm. It catalyses the reaction (R)-pantoate + beta-alanine + ATP = (R)-pantothenate + AMP + diphosphate + H(+). The protein operates within cofactor biosynthesis; (R)-pantothenate biosynthesis; (R)-pantothenate from (R)-pantoate and beta-alanine: step 1/1. Functionally, catalyzes the condensation of pantoate with beta-alanine in an ATP-dependent reaction via a pantoyl-adenylate intermediate. This is Pantothenate synthetase from Shewanella woodyi (strain ATCC 51908 / MS32).